A 207-amino-acid chain; its full sequence is ATP synthase subunit b 2 (207 aa).

A helical transmembrane segment spans residues 53-72 (TYASQLLWLVITFGVFYLLM).

It belongs to the ATPase B chain family. F-type ATPases have 2 components, F(1) - the catalytic core - and F(0) - the membrane proton channel. F(1) has five subunits: alpha(3), beta(3), gamma(1), delta(1), epsilon(1). F(0) has three main subunits: a(1), b(2) and c(10-14). The alpha and beta chains form an alternating ring which encloses part of the gamma chain. F(1) is attached to F(0) by a central stalk formed by the gamma and epsilon chains, while a peripheral stalk is formed by the delta and b chains.

It is found in the cell inner membrane. Its function is as follows. F(1)F(0) ATP synthase produces ATP from ADP in the presence of a proton or sodium gradient. F-type ATPases consist of two structural domains, F(1) containing the extramembraneous catalytic core and F(0) containing the membrane proton channel, linked together by a central stalk and a peripheral stalk. During catalysis, ATP synthesis in the catalytic domain of F(1) is coupled via a rotary mechanism of the central stalk subunits to proton translocation. Component of the F(0) channel, it forms part of the peripheral stalk, linking F(1) to F(0). The b'-subunit is a diverged and duplicated form of b found in plants and photosynthetic bacteria. The polypeptide is ATP synthase subunit b 2 (atpF2) (Rhizobium etli (strain ATCC 51251 / DSM 11541 / JCM 21823 / NBRC 15573 / CFN 42)).